Consider the following 300-residue polypeptide: 33 kDa chaperonin (300 aa).

Intrachain disulfides connect C240-C242 and C273-C276.

The protein belongs to the HSP33 family. Post-translationally, under oxidizing conditions two disulfide bonds are formed involving the reactive cysteines. Under reducing conditions zinc is bound to the reactive cysteines and the protein is inactive.

The protein localises to the cytoplasm. In terms of biological role, redox regulated molecular chaperone. Protects both thermally unfolding and oxidatively damaged proteins from irreversible aggregation. Plays an important role in the bacterial defense system toward oxidative stress. This is 33 kDa chaperonin from Cyanothece sp. (strain PCC 7425 / ATCC 29141).